The primary structure comprises 177 residues: MATIGIFFGSDTGQTRKVAKLIHQKLDGIADAPLDVRRATREQFLSYPVLLLGTPTLGDGELPGVDAGSQYDSWQEFTNTLSEADLSGKTVALFGLGDQLNYSKNFVSAMRILYDLVIARGACVVGNWPREGYKFSFSAALLENNEFVGLPLDQENQYDLTEERIDTWLDKLKQAVL.

In terms of domain architecture, Flavodoxin-like spans 4–173 (IGIFFGSDTG…RIDTWLDKLK (170 aa)).

The protein belongs to the flavodoxin family. It depends on FMN as a cofactor.

Its function is as follows. Low-potential electron donor to a number of redox enzymes. NifF is the electron donor to nitrogenase. In Enterobacter agglomerans (Erwinia herbicola), this protein is Flavodoxin (nifF).